The following is a 295-amino-acid chain: Glycine--tRNA ligase alpha subunit (295 aa).

Belongs to the class-II aminoacyl-tRNA synthetase family. As to quaternary structure, tetramer of two alpha and two beta subunits.

It is found in the cytoplasm. The catalysed reaction is tRNA(Gly) + glycine + ATP = glycyl-tRNA(Gly) + AMP + diphosphate. The sequence is that of Glycine--tRNA ligase alpha subunit from Shouchella clausii (strain KSM-K16) (Alkalihalobacillus clausii).